Here is a 156-residue protein sequence, read N- to C-terminus: Small ribosomal subunit protein uS7 (156 aa).

This sequence belongs to the universal ribosomal protein uS7 family. In terms of assembly, part of the 30S ribosomal subunit. Contacts proteins S9 and S11.

In terms of biological role, one of the primary rRNA binding proteins, it binds directly to 16S rRNA where it nucleates assembly of the head domain of the 30S subunit. Is located at the subunit interface close to the decoding center, probably blocks exit of the E-site tRNA. The protein is Small ribosomal subunit protein uS7 of Renibacterium salmoninarum (strain ATCC 33209 / DSM 20767 / JCM 11484 / NBRC 15589 / NCIMB 2235).